The following is a 152-amino-acid chain: Transcriptional repressor NrdR (152 aa).

A zinc finger spans residues 3-34; sequence CPACQHNGTRVLDSRPVDEGRSIRRRRECESC. An ATP-cone domain is found at 49-139; the sequence is LIVVKKEGIR…VYRQFKDINV (91 aa).

It belongs to the NrdR family. Requires Zn(2+) as cofactor.

Functionally, negatively regulates transcription of bacterial ribonucleotide reductase nrd genes and operons by binding to NrdR-boxes. The chain is Transcriptional repressor NrdR from Bacillus licheniformis (strain ATCC 14580 / DSM 13 / JCM 2505 / CCUG 7422 / NBRC 12200 / NCIMB 9375 / NCTC 10341 / NRRL NRS-1264 / Gibson 46).